The primary structure comprises 510 residues: NAD(P)H-quinone oxidoreductase subunit 2 A, chloroplastic (510 aa).

A run of 13 helical transmembrane segments spans residues 24–44 (LLLFDGSLIFPECILIFGLIL), 57–77 (IPWLYFISSTSLVMSITALLF), 99–119 (IFQFLILLCSTLCIPLSVEYI), 124–144 (MAITEFLLFVLTATLGGMFLC), 149–169 (LITIFVAPECFSLCSYLLSGY), 183–203 (YLLMGGASSSILVHGFSWLYG), 227–247 (PGISIALIFITVGIGFKLSPA), 295–315 (WHLLLEILAILSMILGNLIAI), 323–343 (MLAYSSIGQIGYVIIGIIVGD), 354–374 (YMLFYISMNLGTFACIVLFGL), 395–415 (ALSLALCLLSLGGLPPLAGFF), 418–438 (LYLFWCGWQAGLYFLVLIGLL), and 484–504 (MIVCVIASTIPGISMNPIIAI).

This sequence belongs to the complex I subunit 2 family. NDH is composed of at least 16 different subunits, 5 of which are encoded in the nucleus.

The protein localises to the plastid. The protein resides in the chloroplast thylakoid membrane. The enzyme catalyses a plastoquinone + NADH + (n+1) H(+)(in) = a plastoquinol + NAD(+) + n H(+)(out). It catalyses the reaction a plastoquinone + NADPH + (n+1) H(+)(in) = a plastoquinol + NADP(+) + n H(+)(out). NDH shuttles electrons from NAD(P)H:plastoquinone, via FMN and iron-sulfur (Fe-S) centers, to quinones in the photosynthetic chain and possibly in a chloroplast respiratory chain. The immediate electron acceptor for the enzyme in this species is believed to be plastoquinone. Couples the redox reaction to proton translocation, and thus conserves the redox energy in a proton gradient. This Solanum bulbocastanum (Wild potato) protein is NAD(P)H-quinone oxidoreductase subunit 2 A, chloroplastic.